The chain runs to 130 residues: Small ribosomal subunit protein uS9 (130 aa).

Positions 106–130 are disordered; the sequence is RDSRKVERKKPGLKKARKASQFSKR. Basic residues predominate over residues 111-130; it reads VERKKPGLKKARKASQFSKR.

Belongs to the universal ribosomal protein uS9 family.

The protein is Small ribosomal subunit protein uS9 of Streptococcus pneumoniae (strain ATCC 700669 / Spain 23F-1).